Consider the following 398-residue polypeptide: Acetate kinase (398 aa).

Mg(2+) is bound at residue Asn10. Lys17 contributes to the ATP binding site. Arg91 is a binding site for substrate. The Proton donor/acceptor role is filled by Asp148. ATP contacts are provided by residues 208–212 (HLGNG), 283–285 (DCR), and 331–335 (GIGEN). Glu385 lines the Mg(2+) pocket.

Belongs to the acetokinase family. As to quaternary structure, homodimer. Requires Mg(2+) as cofactor. Mn(2+) is required as a cofactor.

The protein resides in the cytoplasm. The catalysed reaction is acetate + ATP = acetyl phosphate + ADP. Its pathway is metabolic intermediate biosynthesis; acetyl-CoA biosynthesis; acetyl-CoA from acetate: step 1/2. Its function is as follows. Catalyzes the formation of acetyl phosphate from acetate and ATP. Can also catalyze the reverse reaction. This is Acetate kinase from Shewanella woodyi (strain ATCC 51908 / MS32).